Here is a 196-residue protein sequence, read N- to C-terminus: ATP-dependent Clp protease proteolytic subunit (196 aa).

Residue serine 98 is the Nucleophile of the active site. Residue histidine 123 is part of the active site.

The protein belongs to the peptidase S14 family. As to quaternary structure, fourteen ClpP subunits assemble into 2 heptameric rings which stack back to back to give a disk-like structure with a central cavity, resembling the structure of eukaryotic proteasomes.

It localises to the cytoplasm. The enzyme catalyses Hydrolysis of proteins to small peptides in the presence of ATP and magnesium. alpha-casein is the usual test substrate. In the absence of ATP, only oligopeptides shorter than five residues are hydrolyzed (such as succinyl-Leu-Tyr-|-NHMec, and Leu-Tyr-Leu-|-Tyr-Trp, in which cleavage of the -Tyr-|-Leu- and -Tyr-|-Trp bonds also occurs).. In terms of biological role, cleaves peptides in various proteins in a process that requires ATP hydrolysis. Has a chymotrypsin-like activity. Plays a major role in the degradation of misfolded proteins. The chain is ATP-dependent Clp protease proteolytic subunit from Geobacillus thermodenitrificans (strain NG80-2).